A 481-amino-acid polypeptide reads, in one-letter code: Proline--tRNA ligase (481 aa).

Belongs to the class-II aminoacyl-tRNA synthetase family. ProS type 3 subfamily. As to quaternary structure, homodimer.

It localises to the cytoplasm. It catalyses the reaction tRNA(Pro) + L-proline + ATP = L-prolyl-tRNA(Pro) + AMP + diphosphate. Catalyzes the attachment of proline to tRNA(Pro) in a two-step reaction: proline is first activated by ATP to form Pro-AMP and then transferred to the acceptor end of tRNA(Pro). The polypeptide is Proline--tRNA ligase (Chlorobium limicola (strain DSM 245 / NBRC 103803 / 6330)).